The following is a 248-amino-acid chain: 1-(5-phosphoribosyl)-5-[(5-phosphoribosylamino)methylideneamino] imidazole-4-carboxamide isomerase (248 aa).

Asp8 serves as the catalytic Proton acceptor. Catalysis depends on Asp131, which acts as the Proton donor.

The protein belongs to the HisA/HisF family.

The protein resides in the cytoplasm. It catalyses the reaction 1-(5-phospho-beta-D-ribosyl)-5-[(5-phospho-beta-D-ribosylamino)methylideneamino]imidazole-4-carboxamide = 5-[(5-phospho-1-deoxy-D-ribulos-1-ylimino)methylamino]-1-(5-phospho-beta-D-ribosyl)imidazole-4-carboxamide. It participates in amino-acid biosynthesis; L-histidine biosynthesis; L-histidine from 5-phospho-alpha-D-ribose 1-diphosphate: step 4/9. In Paracidovorax citrulli (strain AAC00-1) (Acidovorax citrulli), this protein is 1-(5-phosphoribosyl)-5-[(5-phosphoribosylamino)methylideneamino] imidazole-4-carboxamide isomerase.